A 231-amino-acid polypeptide reads, in one-letter code: Orotidine 5'-phosphate decarboxylase (231 aa).

Residues Asp11, Lys33, 60–69 (DLKFHDIPNT), Thr119, Arg180, Gln189, Gly209, and Arg210 each bind substrate. Residue Lys62 is the Proton donor of the active site.

It belongs to the OMP decarboxylase family. Type 1 subfamily. Homodimer.

The catalysed reaction is orotidine 5'-phosphate + H(+) = UMP + CO2. The protein operates within pyrimidine metabolism; UMP biosynthesis via de novo pathway; UMP from orotate: step 2/2. Catalyzes the decarboxylation of orotidine 5'-monophosphate (OMP) to uridine 5'-monophosphate (UMP). The protein is Orotidine 5'-phosphate decarboxylase of Idiomarina loihiensis (strain ATCC BAA-735 / DSM 15497 / L2-TR).